Here is a 473-residue protein sequence, read N- to C-terminus: 3-isopropylmalate dehydratase large subunit (473 aa).

Cysteine 348, cysteine 408, and cysteine 411 together coordinate [4Fe-4S] cluster.

This sequence belongs to the aconitase/IPM isomerase family. LeuC type 1 subfamily. Heterodimer of LeuC and LeuD. [4Fe-4S] cluster serves as cofactor.

The catalysed reaction is (2R,3S)-3-isopropylmalate = (2S)-2-isopropylmalate. The protein operates within amino-acid biosynthesis; L-leucine biosynthesis; L-leucine from 3-methyl-2-oxobutanoate: step 2/4. Functionally, catalyzes the isomerization between 2-isopropylmalate and 3-isopropylmalate, via the formation of 2-isopropylmaleate. In Haloarcula marismortui (strain ATCC 43049 / DSM 3752 / JCM 8966 / VKM B-1809) (Halobacterium marismortui), this protein is 3-isopropylmalate dehydratase large subunit.